Reading from the N-terminus, the 176-residue chain is dCTP deaminase (176 aa).

DCTP is bound by residues 99–104 (RSTLAR) and Asp-115. Residue Glu-125 is the Proton donor/acceptor of the active site. Gln-163 is a binding site for dCTP.

It belongs to the dCTP deaminase family. In terms of assembly, homotrimer.

It carries out the reaction dCTP + H2O + H(+) = dUTP + NH4(+). It participates in pyrimidine metabolism; dUMP biosynthesis; dUMP from dCTP (dUTP route): step 1/2. Catalyzes the deamination of dCTP to dUTP. The sequence is that of dCTP deaminase from Pyrobaculum aerophilum (strain ATCC 51768 / DSM 7523 / JCM 9630 / CIP 104966 / NBRC 100827 / IM2).